We begin with the raw amino-acid sequence, 99 residues long: A-type ATP synthase subunit F (99 aa).

The protein belongs to the V-ATPase F subunit family. In terms of assembly, has multiple subunits with at least A(3), B(3), C, D, E, F, H, I and proteolipid K(x).

It localises to the cell membrane. Functionally, component of the A-type ATP synthase that produces ATP from ADP in the presence of a proton gradient across the membrane. The sequence is that of A-type ATP synthase subunit F from Methanococcus vannielii (strain ATCC 35089 / DSM 1224 / JCM 13029 / OCM 148 / SB).